The primary structure comprises 201 residues: Adenylyl-sulfate kinase (201 aa).

35 to 42 (GLSGSGKS) is a binding site for ATP. S109 acts as the Phosphoserine intermediate in catalysis.

The protein belongs to the APS kinase family.

It catalyses the reaction adenosine 5'-phosphosulfate + ATP = 3'-phosphoadenylyl sulfate + ADP + H(+). It functions in the pathway sulfur metabolism; hydrogen sulfide biosynthesis; sulfite from sulfate: step 2/3. In terms of biological role, catalyzes the synthesis of activated sulfate. This Citrobacter koseri (strain ATCC BAA-895 / CDC 4225-83 / SGSC4696) protein is Adenylyl-sulfate kinase.